The following is a 246-amino-acid chain: NH(3)-dependent NAD(+) synthetase (246 aa).

29-36 (GLSGGIDS) lines the ATP pocket. Residue Asp35 participates in Mg(2+) binding. A deamido-NAD(+)-binding site is contributed by Arg110. ATP is bound at residue Thr130. Residue Glu135 coordinates Mg(2+). ATP contacts are provided by Lys159 and Ser181.

This sequence belongs to the NAD synthetase family. As to quaternary structure, homodimer.

It carries out the reaction deamido-NAD(+) + NH4(+) + ATP = AMP + diphosphate + NAD(+) + H(+). The protein operates within cofactor biosynthesis; NAD(+) biosynthesis; NAD(+) from deamido-NAD(+) (ammonia route): step 1/1. Catalyzes the ATP-dependent amidation of deamido-NAD to form NAD. Uses ammonia as a nitrogen source. The polypeptide is NH(3)-dependent NAD(+) synthetase (Campylobacter jejuni subsp. jejuni serotype O:2 (strain ATCC 700819 / NCTC 11168)).